The chain runs to 87 residues: U3-theraphotoxin-Hhn1a 15 (87 aa).

Residues 1 to 24 form the signal peptide; the sequence is MVNMKASMFLTFAGLVLLLVVCYA. The propeptide occupies 25-52; sequence SESEEKEFPKEMLSSIFAVDNDFKQEER. Intrachain disulfides connect cysteine 54-cysteine 67, cysteine 61-cysteine 72, and cysteine 66-cysteine 79.

The protein belongs to the neurotoxin 10 (Hwtx-1) family. 51 (Hntx-8) subfamily. Hntx-8 sub-subfamily. Expressed by the venom gland.

The protein localises to the secreted. In terms of biological role, ion channel inhibitor. This chain is U3-theraphotoxin-Hhn1a 15, found in Cyriopagopus hainanus (Chinese bird spider).